The following is a 115-amino-acid chain: Large ribosomal subunit protein bL19 (115 aa).

It belongs to the bacterial ribosomal protein bL19 family.

In terms of biological role, this protein is located at the 30S-50S ribosomal subunit interface and may play a role in the structure and function of the aminoacyl-tRNA binding site. This Streptococcus uberis (strain ATCC BAA-854 / 0140J) protein is Large ribosomal subunit protein bL19.